Here is a 911-residue protein sequence, read N- to C-terminus: SH3 and PX domain-containing protein 2B (911 aa).

The 125-residue stretch at 5 to 129 (RSIVEVKVLD…QFFETRPEDL (125 aa)) folds into the PX domain. Tyr25 carries the post-translational modification Phosphotyrosine. SH3 domains are found at residues 152–211 (MVLE…GQDG) and 221–280 (EEEE…KNSG). A disordered region spans residues 275-366 (LKKNSGEPLP…GLNLPKPPIP (92 aa)). Phosphoserine is present on residues Ser279 and Ser291. Positions 282-292 (PLPPKPGPGSP) are enriched in pro residues. Over residues 311 to 337 (GREKELLSSQRDGRFEGRPVPDGDAKQ) the composition is skewed to basic and acidic residues. Basic residues predominate over residues 338–347 (RSPKMRQRPP). In terms of domain architecture, SH3 3 spans 368 to 427 (QVEEEYYTIAEFQTTIPDGISFQAGLKVEVIEKNLSGWWYIQIEDKEGWAPATFIDKYKK). Residues 458–834 (NTGSEATGPS…GPWGTGKIGE (377 aa)) are disordered. Composition is skewed to basic and acidic residues over residues 486 to 499 (KDWK…RKAS), 517 to 548 (EEKP…RTEQ), 571 to 586 (PARD…DKSR), 598 to 609 (CGHKVLAKEVKK), and 618 to 628 (SKTDLPEEKPD). Ser499 and Ser528 each carry phosphoserine. Composition is skewed to pro residues over residues 643 to 653 (RPKPAPSPKTE) and 756 to 766 (VVPPRRPPPPK). Residues 822–831 (GSLGPWGTGK) are compositionally biased toward gly residues. Residue Ser843 is modified to Phosphoserine. Residues 850–911 (LKDSLYVAVA…IPSNYLRKKP (62 aa)) form the SH3 4 domain.

Belongs to the SH3PXD2 family. As to quaternary structure, interacts with ADAM15. Interacts with NOXO1. Interacts (via SH3 domains) with NOXA1; the interaction is direct. Interacts with FASLG. Phosphorylated in SRC-transformed cells. As to expression, expressed in fibroblasts.

The protein resides in the cytoplasm. It localises to the cell projection. Its subcellular location is the podosome. Its function is as follows. Adapter protein involved in invadopodia and podosome formation and extracellular matrix degradation. Binds matrix metalloproteinases (ADAMs), NADPH oxidases (NOXs) and phosphoinositides. Acts as an organizer protein that allows NOX1- or NOX3-dependent reactive oxygen species (ROS) generation and ROS localization. Plays a role in mitotic clonal expansion during the immediate early stage of adipocyte differentiation. In Homo sapiens (Human), this protein is SH3 and PX domain-containing protein 2B (SH3PXD2B).